Here is a 326-residue protein sequence, read N- to C-terminus: MASAALIDSDMEPTLQPILDQKTLRWIFVGGKGGVGKTTTSCSLAIQLAKHRKSVLLISTDPAHNLSDAFNQKFGKDARLINGFDNLSAMEIDPNGSIQDLLAGGGESGEDAMAGLGGMGNMMQDLAFSIPGVDEAMSFAEVLKQVKSMSYEVIIFDTAPTGHTLRFLQFPTVMEKALSKVSQLSRQFGPMLNSFLGGGGRLPNGQNIDELVEKMEALRGTISEVNGQFKDADLTTFVCVCIPEFLSLYETERMIQELNSYEIDTHSIVVNQLLFPKQDNPCEQCNARRKMQKKYLEQIEELYDEFNVVKMPLLVEEVRGKEKLEK.

32-39 (KGGVGKTT) is a binding site for ATP. Aspartate 61 is a catalytic residue. ATP-binding residues include glutamate 244 and asparagine 271. Positions 282 and 285 each coordinate Zn(2+).

This sequence belongs to the arsA ATPase family. Homodimer.

It is found in the cytoplasm. The protein resides in the endoplasmic reticulum. In terms of biological role, ATPase required for the post-translational delivery of tail-anchored (TA) proteins to the endoplasmic reticulum. Recognizes and selectively binds the transmembrane domain of TA proteins in the cytosol. This complex then targets to the endoplasmic reticulum by membrane-bound receptors, where the tail-anchored protein is released for insertion. This process is regulated by ATP binding and hydrolysis. ATP binding drives the homodimer towards the closed dimer state, facilitating recognition of newly synthesized TA membrane proteins. ATP hydrolysis is required for insertion. Subsequently, the homodimer reverts towards the open dimer state, lowering its affinity for the membrane-bound receptor, and returning it to the cytosol to initiate a new round of targeting. This Phaeosphaeria nodorum (strain SN15 / ATCC MYA-4574 / FGSC 10173) (Glume blotch fungus) protein is ATPase GET3.